Consider the following 150-residue polypeptide: Arginine repressor (150 aa).

Belongs to the ArgR family.

The protein localises to the cytoplasm. It functions in the pathway amino-acid biosynthesis; L-arginine biosynthesis [regulation]. Its function is as follows. Regulates arginine biosynthesis genes. This is Arginine repressor from Clostridium botulinum (strain Okra / Type B1).